The following is a 165-amino-acid chain: Large ribosomal subunit protein uL10 (165 aa).

Belongs to the universal ribosomal protein uL10 family. In terms of assembly, part of the ribosomal stalk of the 50S ribosomal subunit. The N-terminus interacts with L11 and the large rRNA to form the base of the stalk. The C-terminus forms an elongated spine to which L12 dimers bind in a sequential fashion forming a multimeric L10(L12)X complex.

In terms of biological role, forms part of the ribosomal stalk, playing a central role in the interaction of the ribosome with GTP-bound translation factors. The polypeptide is Large ribosomal subunit protein uL10 (Sodalis glossinidius (strain morsitans)).